Consider the following 194-residue polypeptide: Molybdenum cofactor guanylyltransferase (194 aa).

GTP-binding positions include 12-14, Lys25, Asp71, and Asp101; that span reads LAG. Residue Asp101 coordinates Mg(2+).

This sequence belongs to the MobA family. Monomer. It depends on Mg(2+) as a cofactor.

The protein localises to the cytoplasm. It carries out the reaction Mo-molybdopterin + GTP + H(+) = Mo-molybdopterin guanine dinucleotide + diphosphate. Transfers a GMP moiety from GTP to Mo-molybdopterin (Mo-MPT) cofactor (Moco or molybdenum cofactor) to form Mo-molybdopterin guanine dinucleotide (Mo-MGD) cofactor. This chain is Molybdenum cofactor guanylyltransferase, found in Salmonella typhimurium (strain LT2 / SGSC1412 / ATCC 700720).